We begin with the raw amino-acid sequence, 75 residues long: Protein B7 (75 aa).

This Human herpesvirus 6B (strain Z29) (HHV-6 variant B) protein is Protein B7 (B7).